The primary structure comprises 735 residues: Probable pre-mRNA-splicing factor ATP-dependent RNA helicase prp43 (735 aa).

Positions 1 to 12 are enriched in basic and acidic residues; it reads MEPAQKKLRQES. The tract at residues 1–34 is disordered; it reads MEPAQKKLRQESKNPYLAHLNNGDDSEEVVSSKG. A Helicase ATP-binding domain is found at 85 to 250; the sequence is LKIYHENQII…FFDAPLLAVP (166 aa). 98 to 105 provides a ligand contact to ATP; the sequence is GETGSGKT. The DEAH box motif lies at 197 to 200; it reads DEAH. One can recognise a Helicase C-terminal domain in the interval 275–455; the sequence is TVLQIHVEEG…STVLELKKLG (181 aa).

Belongs to the DEAD box helicase family. DEAH subfamily. DDX15/PRP43 sub-subfamily.

It localises to the nucleus. The catalysed reaction is ATP + H2O = ADP + phosphate + H(+). Functionally, pre-mRNA processing factor involved in disassembly of spliceosomes after the release of mature mRNA. The polypeptide is Probable pre-mRNA-splicing factor ATP-dependent RNA helicase prp43 (prp43) (Schizosaccharomyces pombe (strain 972 / ATCC 24843) (Fission yeast)).